Consider the following 140-residue polypeptide: Low calcium response locus protein T (140 aa).

The sequence is that of Low calcium response locus protein T (lcrT) from Yersinia pseudotuberculosis serotype I (strain IP32953).